We begin with the raw amino-acid sequence, 187 residues long: GTP cyclohydrolase 1 (187 aa).

Zn(2+) is bound by residues Cys76, His79, and Cys148.

The protein belongs to the GTP cyclohydrolase I family. As to quaternary structure, toroid-shaped homodecamer, composed of two pentamers of five dimers.

It catalyses the reaction GTP + H2O = 7,8-dihydroneopterin 3'-triphosphate + formate + H(+). The protein operates within cofactor biosynthesis; 7,8-dihydroneopterin triphosphate biosynthesis; 7,8-dihydroneopterin triphosphate from GTP: step 1/1. The polypeptide is GTP cyclohydrolase 1 (Streptococcus suis (strain 98HAH33)).